Reading from the N-terminus, the 217-residue chain is Protein-L-isoaspartate O-methyltransferase (217 aa).

Residue S67 is part of the active site.

Belongs to the methyltransferase superfamily. L-isoaspartyl/D-aspartyl protein methyltransferase family.

It localises to the cytoplasm. The catalysed reaction is [protein]-L-isoaspartate + S-adenosyl-L-methionine = [protein]-L-isoaspartate alpha-methyl ester + S-adenosyl-L-homocysteine. Its function is as follows. Catalyzes the methyl esterification of L-isoaspartyl residues in peptides and proteins that result from spontaneous decomposition of normal L-aspartyl and L-asparaginyl residues. It plays a role in the repair and/or degradation of damaged proteins. The polypeptide is Protein-L-isoaspartate O-methyltransferase (Azoarcus sp. (strain BH72)).